Here is a 233-residue protein sequence, read N- to C-terminus: Probable 2-phosphosulfolactate phosphatase (233 aa).

It belongs to the ComB family. Mg(2+) serves as cofactor.

The enzyme catalyses (2R)-O-phospho-3-sulfolactate + H2O = (2R)-3-sulfolactate + phosphate. This chain is Probable 2-phosphosulfolactate phosphatase, found in Symbiobacterium thermophilum (strain DSM 24528 / JCM 14929 / IAM 14863 / T).